We begin with the raw amino-acid sequence, 263 residues long: Hydroxyethylthiazole kinase (263 aa).

M41 lines the substrate pocket. Residues R117 and T163 each contribute to the ATP site. G190 is a substrate binding site.

The protein belongs to the Thz kinase family. Mg(2+) serves as cofactor.

It catalyses the reaction 5-(2-hydroxyethyl)-4-methylthiazole + ATP = 4-methyl-5-(2-phosphooxyethyl)-thiazole + ADP + H(+). Its pathway is cofactor biosynthesis; thiamine diphosphate biosynthesis; 4-methyl-5-(2-phosphoethyl)-thiazole from 5-(2-hydroxyethyl)-4-methylthiazole: step 1/1. In terms of biological role, catalyzes the phosphorylation of the hydroxyl group of 4-methyl-5-beta-hydroxyethylthiazole (THZ). This chain is Hydroxyethylthiazole kinase, found in Exiguobacterium sp. (strain ATCC BAA-1283 / AT1b).